The sequence spans 98 residues: NADH-ubiquinone oxidoreductase chain 4L (98 aa).

The next 3 membrane-spanning stretches (helical) occupy residues 1-21 (MTPVHFSFTSAFILGLMGLAF), 29-49 (ALLCLEGMMLSLFIALSLWAL), and 58-78 (VAPMLLLAFSACEASAGLALL).

This sequence belongs to the complex I subunit 4L family.

The protein resides in the mitochondrion membrane. It catalyses the reaction a ubiquinone + NADH + 5 H(+)(in) = a ubiquinol + NAD(+) + 4 H(+)(out). Its function is as follows. Core subunit of the mitochondrial membrane respiratory chain NADH dehydrogenase (Complex I) which catalyzes electron transfer from NADH through the respiratory chain, using ubiquinone as an electron acceptor. Part of the enzyme membrane arm which is embedded in the lipid bilayer and involved in proton translocation. This is NADH-ubiquinone oxidoreductase chain 4L (MT-ND4L) from Salmo salar (Atlantic salmon).